A 324-amino-acid chain; its full sequence is 33 kDa ribonucleoprotein, chloroplastic (324 aa).

The transit peptide at 1–71 (MSGCCFSFAA…YRSSIFLSTC (71 aa)) directs the protein to the chloroplast. RRM domains follow at residues 114-192 (GRLY…FPEV) and 217-296 (HKLY…AGQK). The disordered stretch occupies residues 294–324 (GQKAPVSSPPVVETSPENDSDNSELLSSLSS). A compositionally biased stretch (low complexity) spans 298–308 (PVSSPPVVETS).

The protein resides in the plastid. The protein localises to the chloroplast. Functionally, could be involved in splicing and/or processing of chloroplast RNA's. The sequence is that of 33 kDa ribonucleoprotein, chloroplastic from Nicotiana sylvestris (Wood tobacco).